Here is a 293-residue protein sequence, read N- to C-terminus: Probable porphobilinogen deaminase (293 aa).

Cysteine 233 is modified (S-(dipyrrolylmethanemethyl)cysteine).

The protein belongs to the HMBS family. Requires dipyrromethane as cofactor.

It catalyses the reaction 4 porphobilinogen + H2O = hydroxymethylbilane + 4 NH4(+). It participates in porphyrin-containing compound metabolism; protoporphyrin-IX biosynthesis; coproporphyrinogen-III from 5-aminolevulinate: step 2/4. Functionally, tetrapolymerization of the monopyrrole PBG into the hydroxymethylbilane pre-uroporphyrinogen in several discrete steps. The chain is Probable porphobilinogen deaminase from Saccharolobus islandicus (strain M.16.27) (Sulfolobus islandicus).